The following is a 71-amino-acid chain: Arrestin-D (71 aa).

It belongs to the arrestin family. In terms of tissue distribution, adrenal, cerebral cortex, heart, liver, lung, pituitary and testis.

This is Arrestin-D (Dar) from Rattus norvegicus (Rat).